The following is a 992-amino-acid chain: ATP-dependent DNA helicase PIF7 (992 aa).

A mitochondrion-targeting transit peptide spans 1-21 (MWDGPLRSRQNLRTVAKLRSS). 3 disordered regions span residues 20–43 (SSGC…GETA), 145–182 (TVNK…TAAS), and 190–209 (LDSS…AVTQ). Polar residues-rich tracts occupy residues 23-43 (CPLT…GETA), 173-182 (NVDNTTTAAS), and 191-208 (DSSS…QAVT). 237 to 244 (GGAGTGKS) serves as a coordination point for ATP. A DNA-binding region spans residues 651–670 (QAYVALSRCTDVANLVIENF).

The protein belongs to the helicase family. PIF1 subfamily. As to quaternary structure, monomer. It depends on Mg(2+) as a cofactor.

It is found in the mitochondrion matrix. The protein localises to the kinetoplast. The enzyme catalyses Couples ATP hydrolysis with the unwinding of duplex DNA at the replication fork by translocating in the 5'-3' direction. This creates two antiparallel DNA single strands (ssDNA). The leading ssDNA polymer is the template for DNA polymerase III holoenzyme which synthesizes a continuous strand.. It carries out the reaction ATP + H2O = ADP + phosphate + H(+). Functionally, DNA-dependent ATPase and 5'-3' DNA helicase required for the maintenance of mitochondrial (kinetoplast) genome stability. In Trypanosoma brucei brucei (strain 927/4 GUTat10.1), this protein is ATP-dependent DNA helicase PIF7.